A 207-amino-acid chain; its full sequence is ATP-dependent Clp protease proteolytic subunit (207 aa).

Ser-111 (nucleophile) is an active-site residue. The active site involves His-136.

This sequence belongs to the peptidase S14 family. In terms of assembly, fourteen ClpP subunits assemble into 2 heptameric rings which stack back to back to give a disk-like structure with a central cavity, resembling the structure of eukaryotic proteasomes.

Its subcellular location is the cytoplasm. It catalyses the reaction Hydrolysis of proteins to small peptides in the presence of ATP and magnesium. alpha-casein is the usual test substrate. In the absence of ATP, only oligopeptides shorter than five residues are hydrolyzed (such as succinyl-Leu-Tyr-|-NHMec, and Leu-Tyr-Leu-|-Tyr-Trp, in which cleavage of the -Tyr-|-Leu- and -Tyr-|-Trp bonds also occurs).. Its function is as follows. Cleaves peptides in various proteins in a process that requires ATP hydrolysis. Has a chymotrypsin-like activity. Plays a major role in the degradation of misfolded proteins. The chain is ATP-dependent Clp protease proteolytic subunit from Pectobacterium atrosepticum (strain SCRI 1043 / ATCC BAA-672) (Erwinia carotovora subsp. atroseptica).